A 963-amino-acid polypeptide reads, in one-letter code: MADPAECNIKVMCRFRPLNESEVNRGDKYVAKFQGEDTVMIASKPYAFDRVFQSSTSQEQVYNDCAKKIVKDVLEGYNGTIFAYGQTSSGKTHTMEGKLHDPEGMGIIPRIVQDIFNYIYSMDENLEFHIKVSYFEIYLDKIRDLLDVSKTNLSVHEDKNRVPYVKGCTERFVCSPDEVMDTIDEGKSNRHVAVTNMNEHSSRSHSIFLINVKQENTQTEQKLSGKLYLVDLAGSEKVSKTGAEGAVLDEAKNINKSLSALGNVISALAEGSTYVPYRDSKMTRILQDSLGGNCRTTIVICCSPSSYNESETKSTLLFGQRAKTIKNTVCVNVELTAEQWKKKYEKEKEKNKTLRNTIQWLENELNRWRNGETVPIDEQFDKEKANLEAFTADKDIAITSDKPAAAVGMAGSFTDAERRKCEEELAKLYKQLDDKDEEINQQSQLVEKLKTQMLDQEELLASTRRDQDNMQAELNRLQAENDASKEEVKEVLQALEELAVNYDQKSQEVEDKTKEYELLSDELNQKSATLASIDAELQKLKEMTNHQKKRAAEMMASLLKDLAEIGIAVGNNDVKQPEGTGMIDEEFTVARLYISKMKSEVKTMVKRCKQLESTQTESNKKMEENEKELAACQLRISQHEAKIKSLTEYLQNVEQKKRQLEESVDSLGEELVQLRAQEKVHEMEKEHLNKVQTANEVKQAVEQQIQSHRETHQKQISSLRDEVEAKEKLITDLQDQNQKMVLEQERLRVEHERLKATDQEKSRKLHELTVMQDRREQARQDLKGLEETVAKELQTLHNLRKLFVQDLATRVKKSAEVDSDDTGGSAAQKQKISFLENNLEQLTKVHKQLVRDNADLRCELPKLEKRLRATAERVKALESALKEAKENASRDRKRYQQEVDRIKEAVRSKNMARRGHSAQIAKPIRPGQHPAASPTHPGTVRGGGSFVQNNQPVGLRGGGGKQS.

An N-acetylalanine modification is found at alanine 2. The Kinesin motor domain occupies 8–325; it reads NIKVMCRFRP…LLFGQRAKTI (318 aa). Position 85–92 (85–92) interacts with ATP; that stretch reads GQTSSGKT. Lysine 213 is covalently cross-linked (Glycyl lysine isopeptide (Lys-Gly) (interchain with G-Cter in SUMO2)). Residues 329 to 914 are a coiled coil; sequence VCVNVELTAE…AVRSKNMARR (586 aa). A disordered region spans residues 908-963; that stretch reads SKNMARRGHSAQIAKPIRPGQHPAASPTHPGTVRGGGSFVQNNQPVGLRGGGGKQS. The tract at residues 915-963 is globular; that stretch reads GHSAQIAKPIRPGQHPAASPTHPGTVRGGGSFVQNNQPVGLRGGGGKQS. Residues serine 933 and serine 945 each carry the phosphoserine modification. Arginine 956 bears the Omega-N-methylarginine mark.

Belongs to the TRAFAC class myosin-kinesin ATPase superfamily. Kinesin family. Kinesin subfamily. Oligomer composed of two heavy chains and two light chains. Interacts with GRIP1 and PPP1R42. Interacts with SYBU. Interacts with JAKMIP1. Interacts with PLEKHM2. Interacts with ECPAS. Interacts with ZFYVE27. Found in a complex with OGT, RHOT1, RHOT2 and TRAK1. Interacts with APP (via cytoplasmic domain).

It localises to the cytoplasm. The protein localises to the cytoskeleton. Its subcellular location is the cytolytic granule membrane. The protein resides in the lysosome membrane. Microtubule-dependent motor required for normal distribution of mitochondria and lysosomes. May be involved in the mechanisms of growth arrest induced by exposure to DNA-damaging drugs or by cellular senescence. Can induce formation of neurite-like membrane protrusions in non-neuronal cells in a ZFYVE27-dependent manner. Regulates centrosome and nuclear positioning during mitotic entry. During the G2 phase of the cell cycle in a BICD2-dependent manner, antagonizes dynein function and drives the separation of nuclei and centrosomes. Required for anterograde axonal transportation of MAPK8IP3/JIP3 which is essential for MAPK8IP3/JIP3 function in axon elongation. Through binding with PLEKHM2 and ARL8B, directs lysosome movement toward microtubule plus ends. Involved in NK cell-mediated cytotoxicity. Drives the polarization of cytolytic granules and microtubule-organizing centers (MTOCs) toward the immune synapse between effector NK lymphocytes and target cells. This is Kinesin-1 heavy chain (Kif5b) from Mus musculus (Mouse).